A 245-amino-acid chain; its full sequence is Ureidoacrylate amidohydrolase RutB (245 aa).

Asp38 acts as the Proton acceptor in catalysis. Lys147 is an active-site residue. The active-site Nucleophile is Cys180.

Belongs to the isochorismatase family. RutB subfamily.

The catalysed reaction is (Z)-3-ureidoacrylate + H2O + H(+) = (Z)-3-aminoacrylate + NH4(+) + CO2. It carries out the reaction (Z)-3-ureidoacrylate + H2O = (Z)-3-aminoacrylate + carbamate + H(+). It catalyses the reaction (Z)-2-methylureidoacrylate + H2O + H(+) = (Z)-2-methylaminoacrylate + NH4(+) + CO2. Its function is as follows. Hydrolyzes ureidoacrylate to form aminoacrylate and carbamate. The carbamate hydrolyzes spontaneously, thereby releasing one of the nitrogen atoms of the pyrimidine ring as ammonia and one of its carbon atoms as CO2. In Acinetobacter baylyi (strain ATCC 33305 / BD413 / ADP1), this protein is Ureidoacrylate amidohydrolase RutB.